Here is a 713-residue protein sequence, read N- to C-terminus: Constitutive lysine decarboxylase (713 aa).

K367 bears the N6-(pyridoxal phosphate)lysine mark.

The protein belongs to the Orn/Lys/Arg decarboxylase class-I family. In terms of assembly, homodecamer; built of five dimers associated in a 5-fold symmetrical double-ring. The cofactor is pyridoxal 5'-phosphate.

The enzyme catalyses L-lysine + H(+) = cadaverine + CO2. Functionally, plays a role in lysine utilization by acting as a lysine decarboxylase. The sequence is that of Constitutive lysine decarboxylase (ldcC) from Escherichia coli (strain K12).